A 295-amino-acid polypeptide reads, in one-letter code: Secreted frizzled-related protein 2 (295 aa).

The first 24 residues, 1–24 (MPRGPASLLLLVLASHCCLGSARG), serve as a signal peptide directing secretion. The region spanning 35–155 (YKRSNCKPIP…PQDNDLCIPL (121 aa)) is the FZ domain. 8 disulfide bridges follow: Cys40-Cys103, Cys50-Cys96, Cys87-Cys125, Cys114-Cys152, Cys118-Cys142, Cys172-Cys245, Cys175-Cys247, and Cys190-Cys295. Residues 172-295 (CEACKTKNED…ISRSIRKLQC (124 aa)) enclose the NTR domain.

It belongs to the secreted frizzled-related protein (sFRP) family. Highly expressed in the eye. Weaker expression in heart and lung.

The protein localises to the secreted. Soluble frizzled-related proteins (sFRPS) function as modulators of Wnt signaling through direct interaction with Wnts. They have a role in regulating cell growth and differentiation in specific cell types. SFRP2 may be important for eye retinal development and for myogenesis. The polypeptide is Secreted frizzled-related protein 2 (Mus musculus (Mouse)).